The primary structure comprises 301 residues: Mitochondrial import receptor subunit TOM40 homolog (301 aa).

Positions M1–S20 are disordered.

The protein belongs to the Tom40 family. Forms part of the preprotein translocase complex of the outer mitochondrial membrane (TOM complex). Interacts with mitochondrial targeting sequences.

Its subcellular location is the mitochondrion outer membrane. Functionally, channel-forming protein essential for import of protein precursors into mitochondria. Specifically required for nnt-1 accumulation in the mitochondria and may be involved in the secretion of daf-28/insulin from the mitochondria. Required for embryonic and larval development. This Caenorhabditis briggsae protein is Mitochondrial import receptor subunit TOM40 homolog.